We begin with the raw amino-acid sequence, 132 residues long: Nitrogenase iron-iron protein delta chain (132 aa).

Hexamer of two alpha, two beta, and two delta chains. The cofactor is iron-sulfur cluster.

It catalyses the reaction N2 + 8 reduced [2Fe-2S]-[ferredoxin] + 16 ATP + 16 H2O = H2 + 8 oxidized [2Fe-2S]-[ferredoxin] + 2 NH4(+) + 16 ADP + 16 phosphate + 6 H(+). Its function is as follows. The key enzymatic reactions in nitrogen fixation are catalyzed by the nitrogenase complex, which has 2 components: the iron protein (component 2) and a component 1 which is either a molybdenum-iron protein, a vanadium-iron, or an iron-iron protein. The sequence is that of Nitrogenase iron-iron protein delta chain (anfG) from Ruminiclostridium hungatei (Clostridium hungatei).